The sequence spans 331 residues: Anthranilate phosphoribosyltransferase (331 aa).

Residues Gly79, 82 to 83 (GD), Thr87, 89 to 92 (NIST), 107 to 115 (KHGNYGATS), and Ala119 contribute to the 5-phospho-alpha-D-ribose 1-diphosphate site. Position 79 (Gly79) interacts with anthranilate. Ser91 serves as a coordination point for Mg(2+). Asn110 contributes to the anthranilate binding site. Arg165 provides a ligand contact to anthranilate. Mg(2+) contacts are provided by Asp223 and Glu224.

It belongs to the anthranilate phosphoribosyltransferase family. In terms of assembly, homodimer. Mg(2+) is required as a cofactor.

It carries out the reaction N-(5-phospho-beta-D-ribosyl)anthranilate + diphosphate = 5-phospho-alpha-D-ribose 1-diphosphate + anthranilate. It functions in the pathway amino-acid biosynthesis; L-tryptophan biosynthesis; L-tryptophan from chorismate: step 2/5. Catalyzes the transfer of the phosphoribosyl group of 5-phosphorylribose-1-pyrophosphate (PRPP) to anthranilate to yield N-(5'-phosphoribosyl)-anthranilate (PRA). The polypeptide is Anthranilate phosphoribosyltransferase (Phocaeicola vulgatus (strain ATCC 8482 / DSM 1447 / JCM 5826 / CCUG 4940 / NBRC 14291 / NCTC 11154) (Bacteroides vulgatus)).